The chain runs to 506 residues: Lysine--tRNA ligase (506 aa).

Residues Glu415 and Glu422 each coordinate Mg(2+).

It belongs to the class-II aminoacyl-tRNA synthetase family. As to quaternary structure, homodimer. Mg(2+) is required as a cofactor.

Its subcellular location is the cytoplasm. The enzyme catalyses tRNA(Lys) + L-lysine + ATP = L-lysyl-tRNA(Lys) + AMP + diphosphate. This chain is Lysine--tRNA ligase (lysS), found in Buchnera aphidicola subsp. Acyrthosiphon pisum (strain APS) (Acyrthosiphon pisum symbiotic bacterium).